We begin with the raw amino-acid sequence, 708 residues long: B-cell lymphoma 6 protein homolog (708 aa).

The 68-residue stretch at 32–99 (TDVVIIVNRE…MYTSRLNLRE (68 aa)) folds into the BTB domain. The segment covering 303–317 (AKEEERTSSEDEISQ) has biased composition (basic and acidic residues). Disordered stretches follow at residues 303-371 (AKEE…KSPT) and 431-470 (PTKM…QSPL). Polar residues-rich tracts occupy residues 333–370 (SPQS…TKSP) and 431–454 (PTKM…NIVN). 6 C2H2-type zinc fingers span residues 520–543 (FFCN…LQVH), 548–570 (YKCD…KTVH), 576–598 (YRCN…TRIH), 604–626 (YKCE…VLIH), 632–654 (YPCE…LRIH), and 660–683 (YHCE…RQKH).

It is found in the nucleus. Functionally, transcriptional repressor mainly required for germinal center (GC) formation and antibody affinity maturation which has different mechanisms of action specific to the lineage and biological functions. Forms complexes with different corepressors and histone deacetylases to repress the transcriptional expression of different subsets of target genes. Represses its target genes by binding directly to the DNA sequence 5'-TTCCTAGAA-3' (BCL6-binding site) or indirectly by repressing the transcriptional activity of transcription factors. In GC B-cells, represses genes that function in differentiation, inflammation, apoptosis and cell cycle control, also autoregulates its transcriptional expression and up-regulates, indirectly, the expression of some genes important for GC reactions, such as AICDA, through the repression of microRNAs expression. An important function is to allow GC B-cells to proliferate very rapidly in response to T-cell dependent antigens and tolerate the physiological DNA breaks required for immunglobulin class switch recombination and somatic hypermutation without inducing a p53/TP53-dependent apoptotic response. In follicular helper CD4(+) T-cells (T(FH) cells), promotes the expression of T(FH)-related genes but inhibits the differentiation of T(H)1, T(H)2 and T(H)17 cells. Also required for the establishment and maintenance of immunological memory for both T- and B-cells. Suppresses macrophage proliferation through competition with STAT5 for STAT-binding motifs binding on certain target genes, such as CCL2 and CCND2. In response to genotoxic stress, controls cell cycle arrest in GC B-cells in both p53/TP53-dependedent and -independent manners. Besides, also controls neurogenesis through the alteration of the composition of NOTCH-dependent transcriptional complexes at selective NOTCH targets, such as HES5, including the recruitment of the deacetylase SIRT1 and resulting in an epigenetic silencing leading to neuronal differentiation. This is B-cell lymphoma 6 protein homolog from Gallus gallus (Chicken).